Consider the following 953-residue polypeptide: Catenin alpha-2 (953 aa).

Thr632 carries the post-translational modification Phosphothreonine. 3 positions are modified to phosphoserine: Ser640, Ser651, and Ser901. The span at 912 to 927 shows a compositional bias: basic and acidic residues; it reads EKKPLVKREKPEEFQT. The segment at 912 to 939 is disordered; the sequence is EKKPLVKREKPEEFQTRVRRGSQKKHIS. Residues 928 to 938 are compositionally biased toward basic residues; it reads RVRRGSQKKHI. Ser939 carries the post-translational modification Phosphoserine.

Belongs to the vinculin/alpha-catenin family. As to quaternary structure, interacts with CDH1 and CDH2. Interacts with ZNF639; recruits CTNNA2 to the nucleus. Interacts with F-actin. Expressed in neural tissues, with strongest expression in fetal and adult brain. Expressed in the developing cortical plate and marginal zone of 20-week-old human fetal brain.

It localises to the cell membrane. The protein resides in the cytoplasm. Its subcellular location is the cytoskeleton. It is found in the cell junction. The protein localises to the adherens junction. It localises to the cell projection. The protein resides in the axon. Its subcellular location is the nucleus. In terms of biological role, may function as a linker between cadherin adhesion receptors and the cytoskeleton to regulate cell-cell adhesion and differentiation in the nervous system. Required for proper regulation of cortical neuronal migration and neurite growth. It acts as a negative regulator of Arp2/3 complex activity and Arp2/3-mediated actin polymerization. It thereby suppresses excessive actin branching which would impair neurite growth and stability. Regulates morphological plasticity of synapses and cerebellar and hippocampal lamination during development. Functions in the control of startle modulation. The chain is Catenin alpha-2 (CTNNA2) from Homo sapiens (Human).